A 145-amino-acid chain; its full sequence is Androgenic gland hormone (145 aa).

Residues 1–21 form the signal peptide; the sequence is MKGLLFIVSLLCLTLHQRVWA. 4 disulfides stabilise this stretch: C33-C122, C42-C59, C44-C140, and C123-C131. The propeptide at 68–112 is c peptide; the sequence is SADDEDYLFEEDEDDEFFHPRALSPPAAKSGDERLEDEVSFHSRS. N-linked (GlcNAc...) asparagine glycosylation is present at N132.

Androgenic gland.

It localises to the secreted. Its function is as follows. Controls sex differentiation and the formation of male appendages, spermatogenesis, pigmentation, and male specific behavior. The sequence is that of Androgenic gland hormone (AGH) from Porcellio scaber (Common rough woodlouse).